A 625-amino-acid chain; its full sequence is tRNA uridine 5-carboxymethylaminomethyl modification enzyme MnmG (625 aa).

FAD-binding positions include 9–14, Val121, and Ser176; that span reads GGGHAG. 270 to 284 lines the NAD(+) pocket; the sequence is GPRYCPSIEDKIYRF. Gln367 is an FAD binding site.

This sequence belongs to the MnmG family. As to quaternary structure, homodimer. Heterotetramer of two MnmE and two MnmG subunits. It depends on FAD as a cofactor.

The protein resides in the cytoplasm. Its function is as follows. NAD-binding protein involved in the addition of a carboxymethylaminomethyl (cmnm) group at the wobble position (U34) of certain tRNAs, forming tRNA-cmnm(5)s(2)U34. The sequence is that of tRNA uridine 5-carboxymethylaminomethyl modification enzyme MnmG from Nitratiruptor sp. (strain SB155-2).